The primary structure comprises 407 residues: D-inositol 3-phosphate glycosyltransferase (407 aa).

1D-myo-inositol 3-phosphate is bound at residue His2. UDP-N-acetyl-alpha-D-glucosamine is bound by residues 8 to 9 and Gly16; that span reads QP. Residues 13–18, Arg71, Tyr104, Thr128, and Arg148 each bind 1D-myo-inositol 3-phosphate; that span reads DAGGLN. UDP-N-acetyl-alpha-D-glucosamine-binding residues include Arg222 and Lys227. Positions 297, 298, and 300 each coordinate Mg(2+). UDP-N-acetyl-alpha-D-glucosamine is bound by residues Glu310 and Glu318. Position 324 (Thr324) interacts with Mg(2+).

It belongs to the glycosyltransferase group 1 family. MshA subfamily. In terms of assembly, homodimer.

It catalyses the reaction 1D-myo-inositol 3-phosphate + UDP-N-acetyl-alpha-D-glucosamine = 1D-myo-inositol 2-acetamido-2-deoxy-alpha-D-glucopyranoside 3-phosphate + UDP + H(+). Catalyzes the transfer of a N-acetyl-glucosamine moiety to 1D-myo-inositol 3-phosphate to produce 1D-myo-inositol 2-acetamido-2-deoxy-glucopyranoside 3-phosphate in the mycothiol biosynthesis pathway. This chain is D-inositol 3-phosphate glycosyltransferase, found in Frankia alni (strain DSM 45986 / CECT 9034 / ACN14a).